A 275-amino-acid chain; its full sequence is NAD(P)H dehydrogenase [quinone] 1 (275 aa).

Residues His-13, 19–20 (FN), and Gln-68 each bind FAD. Residue Ser-83 is modified to Phosphoserine. Residue 105-108 (LQWF) participates in FAD binding. 127 to 129 (AYT) serves as a coordination point for substrate. FAD is bound by residues 149 to 152 (TTGG), Tyr-157, and Arg-202. The interval 226 to 275 (PSSLFDLNFQAGFLLKKEIEDEQKNNKYGLSVGHHLGKPIPTDNQIKARK) is important for apoenzyme conformational stability. Residue Lys-252 forms a Glycyl lysine isopeptide (Lys-Gly) (interchain with G-Cter in SUMO2) linkage.

This sequence belongs to the NAD(P)H dehydrogenase (quinone) family. As to quaternary structure, homodimer. Interacts with PDLIM4 isoform 2; this interaction stabilizes PDLIM4 isoform 2 in response to oxidative stress and protects it from ubiquitin-independent degradation by the core 20S proteasome. Interacts with TP73 (via SAM domain); this interaction is NADH-dependent, stabilizes TP73 in response to oxidative stress and protects it from ubiquitin-independent degradation by the 20S proteasome. Interacts with TP53; this interaction is NADH-dependent, stabilizes TP53 in response to oxidative stress and protects it from ubiquitin-independent degradation by the 20S proteasome. The cofactor is FAD.

Its subcellular location is the cytoplasm. It is found in the cytosol. It carries out the reaction a quinone + NADH + H(+) = a quinol + NAD(+). The enzyme catalyses a quinone + NADPH + H(+) = a quinol + NADP(+). It catalyses the reaction ubiquinone-10 + NADH + H(+) = ubiquinol-10 + NAD(+). The catalysed reaction is menadione + NADH + H(+) = menadiol + NAD(+). Flavin-containing quinone reductase that catalyzes two-electron reduction of quinones to hydroquinones using either NADH or NADPH as electron donors. In a ping-pong kinetic mechanism, the electrons are sequentially transferred from NAD(P)H to flavin cofactor and then from reduced flavin to the quinone, bypassing the formation of semiquinone and reactive oxygen species. Regulates cellular redox state primarily through quinone detoxification. Reduces components of plasma membrane redox system such as coenzyme Q and vitamin quinones, producing antioxidant hydroquinone forms. In the process may function as superoxide scavenger to prevent hydroquinone oxidation and facilitate excretion. Alternatively, can activate quinones and their derivatives by generating redox reactive hydroquinones with DNA cross-linking antitumor potential. Acts as a gatekeeper of the core 20S proteasome known to degrade proteins with unstructured regions. Upon oxidative stress, interacts with tumor suppressors TP53 and TP73 in a NADH-dependent way and inhibits their ubiquitin-independent degradation by the 20S proteasome. In Cavia porcellus (Guinea pig), this protein is NAD(P)H dehydrogenase [quinone] 1 (NQO1).